The following is a 38-amino-acid chain: GVDKPGCRYMFGGCVQDDDCCPHLGCKRKGLYCAWDAS.

Intrachain disulfides connect Cys7/Cys21, Cys14/Cys26, and Cys20/Cys33. Ser38 bears the Serine amide mark.

This sequence belongs to the neurotoxin 10 (Hwtx-1) family. 28 (Jztx-11) subfamily. As to expression, expressed by the venom gland.

The protein resides in the secreted. Functionally, paralytic toxin on insects that inhibits voltage-gated sodium (Nav) and calcium (Cav) channels in P.americana (American cockroach) dorsal unpaired median (DUM) neurons, and also inhibits the B.germanica (German cockroach) Nav channel (BgNaV1). May act as a gating-modifier toxin on Nav and as a pore blocker on Cav. In vivo, reversibly paralyzes both L.cuprina (Australian sheep blowfly) and M.domestica (housefly), but does not affect larvae of H.armigera (cotton bollworms). The polypeptide is Mu/omega-theraphotoxin-Mb1b (Monocentropus balfouri (Socotra Island blue baboon tarantula)).